Reading from the N-terminus, the 651-residue chain is Ion-translocating oxidoreductase complex subunit C (651 aa).

2 4Fe-4S ferredoxin-type domains span residues 368–398 (EYAE…QQLY) and 408–437 (KSEE…IQYF). 8 residues coordinate [4Fe-4S] cluster: cysteine 378, cysteine 381, cysteine 384, cysteine 388, cysteine 417, cysteine 420, cysteine 423, and cysteine 427. Composition is skewed to basic and acidic residues over residues 465 to 477 (QARM…ERKA) and 485 to 513 (ARRE…KANE). 2 disordered regions span residues 465–565 (QARM…QPTD) and 583–624 (LAQA…DPKK). 2 stretches are compositionally biased toward polar residues: residues 554–564 (VENQEQQTQPT) and 587–600 (NSTS…QTAE). Over residues 602–614 (EVEKTKSAVEKTQ) the composition is skewed to basic and acidic residues.

It belongs to the 4Fe4S bacterial-type ferredoxin family. RnfC subfamily. The complex is composed of six subunits: RnfA, RnfB, RnfC, RnfD, RnfE and RnfG. [4Fe-4S] cluster serves as cofactor.

It is found in the cell inner membrane. Functionally, part of a membrane-bound complex that couples electron transfer with translocation of ions across the membrane. In Haemophilus influenzae (strain PittEE), this protein is Ion-translocating oxidoreductase complex subunit C.